The chain runs to 692 residues: Elongation factor G (692 aa).

The region spanning 8-282 is the tr-type G domain; the sequence is EKTRNIGIMA…AVIDYLPSPL (275 aa). GTP contacts are provided by residues 17–24, 81–85, and 135–138; these read AHVDAGKT, DTPGH, and NKMD.

Belongs to the TRAFAC class translation factor GTPase superfamily. Classic translation factor GTPase family. EF-G/EF-2 subfamily.

The protein resides in the cytoplasm. Its function is as follows. Catalyzes the GTP-dependent ribosomal translocation step during translation elongation. During this step, the ribosome changes from the pre-translocational (PRE) to the post-translocational (POST) state as the newly formed A-site-bound peptidyl-tRNA and P-site-bound deacylated tRNA move to the P and E sites, respectively. Catalyzes the coordinated movement of the two tRNA molecules, the mRNA and conformational changes in the ribosome. This is Elongation factor G from Streptococcus agalactiae serotype III (strain NEM316).